A 518-amino-acid chain; its full sequence is Membrane-bound lytic murein transglycosylase F (518 aa).

The first 21 residues, 1–21 (MKKLKINYLFIGILALLLAVA), serve as a signal peptide directing secretion. The non-LT domain stretch occupies residues 22–269 (LWPSIPWFGK…RIEEKYLGHG (248 aa)). Positions 270–518 (DDFDYVDTRT…SRKGSEEKQN (249 aa)) are LT domain. Glutamate 314 is a catalytic residue.

This sequence in the N-terminal section; belongs to the bacterial solute-binding protein 3 family. In the C-terminal section; belongs to the transglycosylase Slt family.

Its subcellular location is the cell outer membrane. The catalysed reaction is Exolytic cleavage of the (1-&gt;4)-beta-glycosidic linkage between N-acetylmuramic acid (MurNAc) and N-acetylglucosamine (GlcNAc) residues in peptidoglycan, from either the reducing or the non-reducing ends of the peptidoglycan chains, with concomitant formation of a 1,6-anhydrobond in the MurNAc residue.. Its function is as follows. Murein-degrading enzyme that degrades murein glycan strands and insoluble, high-molecular weight murein sacculi, with the concomitant formation of a 1,6-anhydromuramoyl product. Lytic transglycosylases (LTs) play an integral role in the metabolism of the peptidoglycan (PG) sacculus. Their lytic action creates space within the PG sacculus to allow for its expansion as well as for the insertion of various structures such as secretion systems and flagella. This Shigella dysenteriae serotype 1 (strain Sd197) protein is Membrane-bound lytic murein transglycosylase F.